Here is a 33-residue protein sequence, read N- to C-terminus: Alpha-amanitin proprotein (33 aa).

A propeptide spanning residues 1-10 is cleaved from the precursor; it reads MSDINATRLP. I11 is subject to (3R,4R)-4,5-dihydroxyisoleucine; in form alpha-amanitin. I11 is modified ((3R,4S)-4-hydroxyisoleucine; in form gamma-amanitin). The cyclopeptide (Ile-Pro) cross-link spans 11 to 18; the sequence is IWGIGCNP. The segment at residues 12 to 16 is a cross-link (2'-cysteinyl-6'-hydroxytryptophan sulfoxide (Trp-Cys)); the sequence is WGIGC. P18 carries the post-translational modification 4-hydroxyproline. Residues 19–33 constitute a propeptide that is removed on maturation; sequence CVGDEVTALLTRGEA.

The protein belongs to the MSDIN fungal toxin family. Post-translationally, processed by the macrocyclase-peptidase enzyme POPB to yield a toxic cyclic decapeptide. POPB first removes 10 residues from the N-terminus. Conformational trapping of the remaining peptide forces the enzyme to release this intermediate rather than proceed to macrocyclization. The enzyme rebinds the remaining peptide in a different conformation and catalyzes macrocyclization of the N-terminal 8 residues.

Its function is as follows. Major toxin belonging to the bicyclic octapeptides amatoxins that acts by binding non-competitively to RNA polymerase II and greatly slowing the elongation of transcripts from target promoters. In Amanita fuligineoides, this protein is Alpha-amanitin proprotein.